The primary structure comprises 330 residues: Aspartate--ammonia ligase (330 aa).

It belongs to the class-II aminoacyl-tRNA synthetase family. AsnA subfamily.

It localises to the cytoplasm. The enzyme catalyses L-aspartate + NH4(+) + ATP = L-asparagine + AMP + diphosphate + H(+). It participates in amino-acid biosynthesis; L-asparagine biosynthesis; L-asparagine from L-aspartate (ammonia route): step 1/1. In Salmonella newport (strain SL254), this protein is Aspartate--ammonia ligase.